The primary structure comprises 848 residues: Nuclear cap-binding protein subunit 1 (848 aa).

One can recognise an MIF4G domain in the interval 8–228 (LLRIGEKGPE…DLLDRIQSLA (221 aa)). Residues 767–786 (EDDKPSAMDVDSENGNPKKS) are disordered.

This sequence belongs to the NCBP1 family. In terms of assembly, component of the nuclear cap-binding complex (CBC), a heterodimer composed of ABH1/CBP80 and CBP20 that interacts with m7GpppG-capped RNA. As to expression, expressed in all tissues analyzed, including roots, stems, leaves and flowers.

Its subcellular location is the nucleus. It is found in the cytoplasm. Functionally, component of the cap-binding complex (CBC), which binds cotranscriptionally to the 5'-cap of pre-mRNAs and is involved in various processes such as pre-mRNA splicing and RNA-mediated gene silencing (RNAi) by microRNAs (miRNAs). The CBC complex is involved in miRNA-mediated RNA interference and is required for primary miRNA processing. In the CBC complex, ABH1/CBP80 does not bind directly capped RNAs (m7GpppG-capped RNA) but is required to stabilize the movement of the N-terminal loop of CBP20 and lock the CBC into a high affinity cap-binding state with the cap structure. Involved in flowering regulation, possibly by regulating pre-mRNA splicing of FLC gene. Acts as a negative regulator of abscisic acid signaling in guard cells. This chain is Nuclear cap-binding protein subunit 1 (ABH1), found in Arabidopsis thaliana (Mouse-ear cress).